The chain runs to 297 residues: Pyridoxal 5'-phosphate synthase subunit Pdx1 (297 aa).

Aspartate 27 is a binding site for D-ribose 5-phosphate. The active-site Schiff-base intermediate with D-ribose 5-phosphate is the lysine 84. Glycine 156 lines the D-ribose 5-phosphate pocket. Position 168 (arginine 168) interacts with D-glyceraldehyde 3-phosphate. Residues glycine 217 and 238–239 (GS) each bind D-ribose 5-phosphate.

This sequence belongs to the PdxS/SNZ family. As to quaternary structure, homohexamer and homododecamer. In the presence of Pdx2, forms a dodecamer of heterodimers.

It carries out the reaction aldehydo-D-ribose 5-phosphate + D-glyceraldehyde 3-phosphate + L-glutamine = pyridoxal 5'-phosphate + L-glutamate + phosphate + 3 H2O + H(+). Its pathway is cofactor biosynthesis; pyridoxal 5'-phosphate biosynthesis. Its function is as follows. Catalyzes the formation of pyridoxal 5'-phosphate from ribose 5-phosphate (RBP), glyceraldehyde 3-phosphate (G3P) and ammonia. The ammonia is provided by Pdx2. Can also use ribulose 5-phosphate and dihydroxyacetone phosphate as substrates, resulting from enzyme-catalyzed isomerization of RBP and G3P, respectively. This Plasmodium berghei protein is Pyridoxal 5'-phosphate synthase subunit Pdx1.